A 612-amino-acid chain; its full sequence is Glutamine--fructose-6-phosphate aminotransferase [isomerizing] (612 aa).

C2 functions as the Nucleophile; for GATase activity in the catalytic mechanism. The region spanning 2–220 is the Glutamine amidotransferase type-2 domain; sequence CGIVGAIRAH…DGDIALLASD (219 aa). SIS domains follow at residues 288–428 and 461–602; these read AKSV…VRGL and WAQQ…VDKP. Catalysis depends on K607, which acts as the For Fru-6P isomerization activity.

Homodimer.

The protein localises to the cytoplasm. The enzyme catalyses D-fructose 6-phosphate + L-glutamine = D-glucosamine 6-phosphate + L-glutamate. Catalyzes the first step in hexosamine metabolism, converting fructose-6P into glucosamine-6P using glutamine as a nitrogen source. The chain is Glutamine--fructose-6-phosphate aminotransferase [isomerizing] from Neisseria meningitidis serogroup A / serotype 4A (strain DSM 15465 / Z2491).